Here is a 101-residue protein sequence, read N- to C-terminus: Large ribosomal subunit protein uL24 (101 aa).

This sequence belongs to the universal ribosomal protein uL24 family. As to quaternary structure, part of the 50S ribosomal subunit.

One of two assembly initiator proteins, it binds directly to the 5'-end of the 23S rRNA, where it nucleates assembly of the 50S subunit. Its function is as follows. One of the proteins that surrounds the polypeptide exit tunnel on the outside of the subunit. In Streptococcus agalactiae serotype III (strain NEM316), this protein is Large ribosomal subunit protein uL24.